The chain runs to 233 residues: Protein Atu3128 (233 aa).

Belongs to the glycosyl hydrolase 88 family.

Seems to regulate the surface properties of the bacterium in the presence of plant cells or plant cell extracts. Mutations in this protein are responsible for an increased aggregation of the bacteria in the presence of pea root cap cells. The chain is Protein Atu3128 from Agrobacterium fabrum (strain C58 / ATCC 33970) (Agrobacterium tumefaciens (strain C58)).